Consider the following 74-residue polypeptide: Translational regulator CsrA (74 aa).

This sequence belongs to the CsrA/RsmA family. As to quaternary structure, homodimer; the beta-strands of each monomer intercalate to form a hydrophobic core, while the alpha-helices form wings that extend away from the core.

Its subcellular location is the cytoplasm. Its function is as follows. A translational regulator that binds mRNA to regulate translation initiation and/or mRNA stability. Usually binds in the 5'-UTR at or near the Shine-Dalgarno sequence preventing ribosome-binding, thus repressing translation. Its main target seems to be the major flagellin gene, while its function is anatagonized by FliW. The chain is Translational regulator CsrA from Oceanobacillus iheyensis (strain DSM 14371 / CIP 107618 / JCM 11309 / KCTC 3954 / HTE831).